The primary structure comprises 128 residues: MAPVKKTVTKGSKKKKQLLKFTLDCTHPVEDGIMDAANFEQFLHDRIKVNGKVGNLGGGVVSIERSKSKITVSSEVPFSKRYLKYLTKKYLKKNNLRDWLRVVANSKESYELRYFQINQDEEEEEDED.

This sequence belongs to the eukaryotic ribosomal protein eL22 family. In terms of assembly, component of the large ribosomal subunit.

The protein resides in the cytoplasm. Functionally, component of the large ribosomal subunit. The ribosome is a large ribonucleoprotein complex responsible for the synthesis of proteins in the cell. The chain is Large ribosomal subunit protein eL22 (rpl22) from Xenopus tropicalis (Western clawed frog).